A 313-amino-acid chain; its full sequence is Malate dehydrogenase (313 aa).

Residues 11–16 (GAGNIG) and Asp35 contribute to the NAD(+) site. Substrate is bound by residues Arg86 and Arg92. Residues Asn99 and 122–124 (ISN) each bind NAD(+). Residues Asn124 and Arg155 each coordinate substrate. Residue His179 is the Proton acceptor of the active site.

The protein belongs to the LDH/MDH superfamily. MDH type 3 family.

The catalysed reaction is (S)-malate + NAD(+) = oxaloacetate + NADH + H(+). Catalyzes the reversible oxidation of malate to oxaloacetate. The protein is Malate dehydrogenase of Sorangium cellulosum (strain So ce56) (Polyangium cellulosum (strain So ce56)).